A 243-amino-acid chain; its full sequence is Voltage-gated monoatomic cation channel TMEM109 (243 aa).

The signal sequence occupies residues 1–33 (MAGSGSSAPWGKHLLHAVLMVLVALVLLHSALA). Residues 34–83 (QSHRDFAPPGQQRREAPVDLLTQIGRSVRETLDTWIGPETMHLISETLSQ) are Lumenal-facing. The helical transmembrane segment at 84–104 (VMWAISSAISVAFFALSGIAA) threads the bilayer. At 105 to 135 (QLLTALGLDGDHLTQGLKLSPSQVQTFLLWG) the chain is on the cytoplasmic side. The chain crosses the membrane as a helical span at residues 136–156 (AGALVVYWLLSLLLGLVLAVL). Residues 157–185 (GRILGGLKLVIFLAGFVALVRSVPDPSTR) lie on the Lumenal side of the membrane. Residues 186–205 (ALLLLALLTLYALLSRLTGS) form a helical membrane-spanning segment. Topologically, residues 206–243 (RASGAQLEAKVRGLERQVDELRWRQRRAAKGARSVEEE) are cytoplasmic.

Homooligomer. Interacts with CRYAB; in the cellular response to DNA damage. Post-translationally, the N-terminus is blocked. Widely expressed. Expressed in skeletal, cardiac and smooth muscle cells, in brain, including neuroglial cells, cerebral cortex neurons and cerebellum, but not Purkinje cells. Also detected in Paneth and Goblet cells of the small intestine (but not in the epithelium), duodenal gland, pancreas, parotid gland, testis, thyroid gland and adrenal gland, as well as in epidermis, choroid plexus, ductus epididymidis, lymphocytes, fibroblasts, endothelial cells and seminiferous epithelial cells (at protein level). Not detected in mucous cells of the duodenal gland, in hepatocytes nor in uriniferous tubules.

The protein resides in the nucleus outer membrane. Its subcellular location is the endoplasmic reticulum membrane. The protein localises to the sarcoplasmic reticulum membrane. The catalysed reaction is K(+)(in) = K(+)(out). The enzyme catalyses Ca(2+)(in) = Ca(2+)(out). Functions as a voltage-gated monoatomic cation channel permeable to both potassium and calcium. Plays a role in the cellular response to DNA damage. This is Voltage-gated monoatomic cation channel TMEM109 from Oryctolagus cuniculus (Rabbit).